The chain runs to 755 residues: Putative two-component response regulator-like APRR6 (755 aa).

In terms of domain architecture, Response regulatory spans 14–128 (SILLIDHDTA…DIKNMWQHVF (115 aa)).

This sequence belongs to the ARR-like family.

The protein resides in the nucleus. In Arabidopsis thaliana (Mouse-ear cress), this protein is Putative two-component response regulator-like APRR6 (APRR6).